An 89-amino-acid polypeptide reads, in one-letter code: Ubiquinol-cytochrome-c reductase complex assembly factor 3 (89 aa).

Over 1–7 (MEVARKA) the chain is Mitochondrial matrix. Residues 8-28 (LVAVAVLGGGAGVGSILFALV) form a helical membrane-spanning segment. Positions 23–80 (ILFALVTPGELQKQSMLQEMPERDSRRRDEAVRTTELVMATLKDAAATKENVAWRRNW) are mediates lipid-binding. Residues 29–89 (TPGELQKQSM…WTVSGDGRSA (61 aa)) lie on the Mitochondrial intermembrane side of the membrane.

The protein belongs to the UQCC3 family. In terms of assembly, associates with the ubiquinol-cytochrome c reductase complex (mitochondrial respiratory chain complex III(CIII) or cytochrome b-c1 complex). Interacts with UQCC1. Forms a complex, named COMC, composed of UQCC1, UQCC2; UQCC3 and UQCC4; mediates MT-CYB hemylation and association with the first nuclear-encoded complex III subunit UQCRQ. Probably cleaved by OMA1 under mitochondrial stress conditions.

It localises to the mitochondrion inner membrane. In terms of biological role, required for the assembly of the ubiquinol-cytochrome c reductase complex (mitochondrial respiratory chain complex III or cytochrome b-c1 complex), mediating cytochrome b recruitment and probably stabilization within the complex. Thereby, plays an important role in ATP production by mitochondria. Cardiolipin-binding protein, it may also control the cardiolipin composition of mitochondria membranes and their morphology. The polypeptide is Ubiquinol-cytochrome-c reductase complex assembly factor 3 (Mus musculus (Mouse)).